The chain runs to 564 residues: DNA ligase B (564 aa).

The N6-AMP-lysine intermediate role is filled by Lys130.

Belongs to the NAD-dependent DNA ligase family. LigB subfamily.

The catalysed reaction is NAD(+) + (deoxyribonucleotide)n-3'-hydroxyl + 5'-phospho-(deoxyribonucleotide)m = (deoxyribonucleotide)n+m + AMP + beta-nicotinamide D-nucleotide.. In terms of biological role, catalyzes the formation of phosphodiester linkages between 5'-phosphoryl and 3'-hydroxyl groups in double-stranded DNA using NAD as a coenzyme and as the energy source for the reaction. The protein is DNA ligase B of Klebsiella pneumoniae subsp. pneumoniae (strain ATCC 700721 / MGH 78578).